A 185-amino-acid polypeptide reads, in one-letter code: NOP protein chaperone 1 (185 aa).

Ser34, Ser66, and Ser177 each carry phosphoserine. Positions Ser121 to Gln185 are disordered.

In terms of assembly, interacts with NOP58, RUVBL1 and RUVBL2; the interactions are direct and NOPCHAP1 bridges the association of NOP58 with RUVBL1:RUVBL2 even in absence of snoRNAs. The interactions with RUVBL1 and RUVBL2 are disrupted upon ATP binding.

The protein localises to the nucleus. Its function is as follows. Client-loading PAQosome/R2TP complex cofactor that selects NOP58 to promote box C/D small nucleolar ribonucleoprotein (snoRNP) assembly. Acts as a bridge between NOP58 and the R2TP complex via RUVBL1:RUVBL2. The chain is NOP protein chaperone 1 from Mus musculus (Mouse).